The chain runs to 737 residues: Aryl hydrocarbon receptor nuclear translocator 2 (737 aa).

The interval 1 to 73 is disordered; it reads MATPAAVNPS…SRYDDDQIPG (73 aa). The segment covering 64–73 has biased composition (basic and acidic residues); sequence SRYDDDQIPG. The 54-residue stretch at 78 to 131 folds into the bHLH domain; it reads YARENHSEIERRRRNKMTQYITELSDMVPTCSALARKPDKLTILRMAVSHMKSM. PAS domains are found at residues 149–221 and 340–406; these read TEQE…ENSM and SMDM…QVVK. One can recognise a PAC domain in the interval 413-456; sequence SVMYRFRMKNREWMLIRTSSFTFQNPYSDEIEYIICTNTNVKQL. 2 disordered regions span residues 525-556 and 588-721; these read MMVP…FSSS and QVSW…TTNY. Composition is skewed to polar residues over residues 528 to 543 and 588 to 626; these read PSST…QGSP and QVSW…YQAD. Over residues 627-642 the composition is skewed to low complexity; it reads PSSYSPLSSPATSSPS. Over residues 643-656 the composition is skewed to polar residues; it reads GNAYSNLANRNTAF. Low complexity predominate over residues 659-688; sequence SGESSQSGGQFQGRPSEVWSQWQSQHHSQQ.

In terms of assembly, efficient DNA binding requires dimerization with another bHLH protein. Heterodimer with the aryl hydrocarbon receptor (AHR), SIM1 or HIF2A/EPAS-1. Isoform 1 and isoform 2 are most highly expressed in the brain, eye and skeletal muscle and to a lower degree in liver, heart, kidney and swim bladder. Isoform 3 is most highly expressed in the eye, forebrain, midbrain, hindbrain, skeletal muscle, gills and brain but is barely detectable in liver, heart, kidney and swim bladder. Before the pharyngula period isoform 3 is expressed throughout the entire embryo and during this period extensively in the brain and eye.

It localises to the nucleus. Its function is as follows. Transcription factor that plays a role in the development of the hypothalamo-pituitary axis. Specifically recognizes the xenobiotic response element (XRE). Isoform 1 acts as a transcriptional activator. Isoform 3 acts as a transcriptional repressor. The protein is Aryl hydrocarbon receptor nuclear translocator 2 of Danio rerio (Zebrafish).